Reading from the N-terminus, the 424-residue chain is Putative chloroquine resistance transporter (424 aa).

Topologically, residues methionine 1–asparagine 56 are cytoplasmic. A helical membrane pass occupies residues isoleucine 57–serine 77. Residues lysine 78–serine 88 lie on the Vacuolar side of the membrane. Asparagine 86 carries N-linked (GlcNAc...) asparagine glycosylation. A helical membrane pass occupies residues phenylalanine 89–isoleucine 109. Residues tyrosine 110 to asparagine 125 are Cytoplasmic-facing. Residues phenylalanine 126–isoleucine 146 traverse the membrane as a helical segment. Residues glycine 147–glutamine 156 are Vacuolar-facing. Residues serine 157–tyrosine 177 form a helical membrane-spanning segment. Over arginine 178–histidine 180 the chain is Cytoplasmic. Residues leucine 181 to leucine 201 traverse the membrane as a helical segment. The Vacuolar portion of the chain corresponds to serine 202–asparagine 209. A helical membrane pass occupies residues serine 210–threonine 230. Residues arginine 231–methionine 248 are Cytoplasmic-facing. Residues valine 249–leucine 269 traverse the membrane as a helical segment. Topologically, residues lysine 270–lysine 317 are vacuolar. Intrachain disulfides connect cysteine 289-cysteine 312 and cysteine 301-cysteine 309. Residues threonine 318–aspartate 338 traverse the membrane as a helical segment. Residues lysine 339–threonine 346 lie on the Cytoplasmic side of the membrane. Residues isoleucine 347–glycine 367 traverse the membrane as a helical segment. The Vacuolar portion of the chain corresponds to aspartate 368 to aspartate 377. A helical transmembrane segment spans residues phenylalanine 378–leucine 398. Topologically, residues glutamate 399–alanine 424 are cytoplasmic.

It belongs to the CRT-like transporter family.

It is found in the vacuole membrane. Functionally, nutrient transporter. Involved in maintaining the osmotic homeostasis of the digestive vacuole. This is Putative chloroquine resistance transporter from Plasmodium chabaudi.